A 132-amino-acid polypeptide reads, in one-letter code: Small ribosomal subunit protein uS11c (132 aa).

The protein belongs to the universal ribosomal protein uS11 family. In terms of assembly, part of the 30S ribosomal subunit.

Its subcellular location is the plastid. It is found in the chloroplast. This Cryptomeria japonica (Japanese cedar) protein is Small ribosomal subunit protein uS11c.